The chain runs to 234 residues: MFDTKALQAEQRQRASEISLHDGIDNQSVRFIAGADVGFEQHGEITRAAIAILRYPSLALVEYQVARVATSLPYIPGLLSFREYPALLAAWAQLQQRPDLILVDGQGIAHPRRLGVASHFGLLVDVPTIGVAKSRLCGDFLPLHQDVGAVQPLFDNDEQLGWVWRSKIRCNPLFISPGHRVSVGSALAWVQRCMAGYRLPEPTRWADAIASNRPQFQRWLRKNPDFLGKRRDMI.

Residues D36 and D104 each contribute to the Mg(2+) site.

Belongs to the endonuclease V family. Requires Mg(2+) as cofactor.

It localises to the cytoplasm. It carries out the reaction Endonucleolytic cleavage at apurinic or apyrimidinic sites to products with a 5'-phosphate.. DNA repair enzyme involved in the repair of deaminated bases. Selectively cleaves double-stranded DNA at the second phosphodiester bond 3' to a deoxyinosine leaving behind the intact lesion on the nicked DNA. In Yersinia pestis, this protein is Endonuclease V.